The primary structure comprises 206 residues: Imidazole glycerol phosphate synthase subunit HisH (206 aa).

The region spanning 1–206 (MIVIIDYGMG…LRILKNFGDM (206 aa)) is the Glutamine amidotransferase type-1 domain. Cysteine 79 (nucleophile) is an active-site residue. Active-site residues include histidine 188 and glutamate 190.

In terms of assembly, heterodimer of HisH and HisF.

The protein resides in the cytoplasm. The enzyme catalyses 5-[(5-phospho-1-deoxy-D-ribulos-1-ylimino)methylamino]-1-(5-phospho-beta-D-ribosyl)imidazole-4-carboxamide + L-glutamine = D-erythro-1-(imidazol-4-yl)glycerol 3-phosphate + 5-amino-1-(5-phospho-beta-D-ribosyl)imidazole-4-carboxamide + L-glutamate + H(+). The catalysed reaction is L-glutamine + H2O = L-glutamate + NH4(+). It participates in amino-acid biosynthesis; L-histidine biosynthesis; L-histidine from 5-phospho-alpha-D-ribose 1-diphosphate: step 5/9. Its function is as follows. IGPS catalyzes the conversion of PRFAR and glutamine to IGP, AICAR and glutamate. The HisH subunit catalyzes the hydrolysis of glutamine to glutamate and ammonia as part of the synthesis of IGP and AICAR. The resulting ammonia molecule is channeled to the active site of HisF. This chain is Imidazole glycerol phosphate synthase subunit HisH, found in Syntrophotalea carbinolica (strain DSM 2380 / NBRC 103641 / GraBd1) (Pelobacter carbinolicus).